Here is a 148-residue protein sequence, read N- to C-terminus: uncharacterized protein (148 aa).

The signal sequence occupies residues 1–22 (MVQTVLNSVWLWRSVLLRLTFS).

This is an uncharacterized protein from Saccharomyces cerevisiae (strain ATCC 204508 / S288c) (Baker's yeast).